The following is a 266-amino-acid chain: UPF0354 protein Lm4b_01619 (266 aa).

The protein belongs to the UPF0354 family.

This Listeria monocytogenes serotype 4b (strain CLIP80459) protein is UPF0354 protein Lm4b_01619.